Consider the following 603-residue polypeptide: Aspartate--tRNA(Asp/Asn) ligase (603 aa).

The tract at residues 205–208 is aspartate; that stretch reads QLFK. Arg227 contributes to the L-aspartate binding site. Residues 227–229 and Gln236 contribute to the ATP site; that span reads RDE. His463 contributes to the L-aspartate binding site. Residue Glu497 participates in ATP binding. Arg504 contributes to the L-aspartate binding site. 549–552 lines the ATP pocket; it reads GMDR.

This sequence belongs to the class-II aminoacyl-tRNA synthetase family. Type 1 subfamily. Homodimer.

The protein localises to the cytoplasm. It carries out the reaction tRNA(Asx) + L-aspartate + ATP = L-aspartyl-tRNA(Asx) + AMP + diphosphate. In terms of biological role, aspartyl-tRNA synthetase with relaxed tRNA specificity since it is able to aspartylate not only its cognate tRNA(Asp) but also tRNA(Asn). Reaction proceeds in two steps: L-aspartate is first activated by ATP to form Asp-AMP and then transferred to the acceptor end of tRNA(Asp/Asn). This chain is Aspartate--tRNA(Asp/Asn) ligase, found in Anaeromyxobacter dehalogenans (strain 2CP-1 / ATCC BAA-258).